We begin with the raw amino-acid sequence, 147 residues long: Hemoglobin subunit beta-2 (147 aa).

Residues 3 to 147 form the Globin domain; that stretch reads EWTDSERAII…VVSALGRQYH (145 aa). Residues His-64 and His-93 each coordinate heme b.

Belongs to the globin family. In terms of assembly, hb 3 is a heterotetramer of two alpha-2 and two beta-2 chains. Red blood cells.

In terms of biological role, involved in oxygen transport from gills to the various peripheral tissues. The chain is Hemoglobin subunit beta-2 (hbb2) from Arctogadus glacialis (Arctic cod).